The primary structure comprises 720 residues: Cyclopenase penL (720 aa).

Residues H137, H141, and H313 each coordinate Cu cation.

This sequence belongs to the tyrosinase family. It depends on Cu(2+) as a cofactor.

The catalysed reaction is (-)-cyclopenine = viridicatin + methyl isocyanate + H(+). It carries out the reaction (-)-4'-methoxycyclopenine = 4'-methoxyviridicatin + methyl isocyanate + H(+). Its pathway is secondary metabolite biosynthesis. It participates in alkaloid biosynthesis. It functions in the pathway mycotoxin biosynthesis. Cyclopenase; part of the gene cluster that mediates the biosynthesis of penigequinolones, potent insecticidal alkaloids that contain a highly modified 10-carbon prenyl group. The first stage is catalyzed by the nonribosomal peptide synthetase penN that condenses anthranilic acid and O-methyl-L-tyrosine to produce 4'-methoxycyclopeptin. 4'-methoxycyclopeptin is then converted to 4'-methoxydehydrocyclopeptin by the ketoglutarate-dependent dioxygenase penM through dehydrogenation to form a double bond between C-alpha and C-beta of the O-methyltyrosine side chain. PenM also converts its first product methoxydehydrocyclopeptin to 4'-methoxycyclopenin. The following conversion of 4'methoxycyclopenin into 4'-methoxyviridicatin is catalyzed by the cyclopenase penL. 4'-methoxyviridicatin is the precursor of quinolone natural products, and is further converted to quinolinone B. The prenyltransferase penI then catalyzes the canonical Friedel-Crafts alkylation of quinolinone B with dimethylallyl cation to yield dimethylallyl quinolone, which is subjected to FAD-dependent dehydrogenation by the FAD-linked oxidoreductase penH to yield conjugated aryl diene. The delta(3') double bond then serves as the site of the second alkylation with DMAPP catalyzed by the prenyltransferase penG to yield a carbenium ion intermediate, which can be attacked by H(2)O to yield a styrenyl quinolone containing a C3'-hydroxyprenyl chain, or undergo cyclization to yield yaequinolones J1 and J2. The conversion of the styrenyl quinolone into the tetrahydrofuran-containing yaequinolone C is performed by the FAD-dependent monooxygenase penE and involves epoxidation of the terminal C7'-C8' olefin, followed by epoxide ring opening initiated by the C3' hydroxyl group. The predicted cysteine hydrolase penJ acts as an epoxide hydrolase that enhances the rate of the 5-exo-tet cyclization step, increasing the yield of yaequinolone C. PenF catalyzes the cationic rearrangement of the epoxide formed by penE (before ring opening to produce yaequinolone C) into yaequinolone D. Finally, the short-chain dehydrogenase/reductase (SDR)-like reductase penD, catalyzes both the dehydration of yaequinolone D and the reduction of the resulting oxonium to yield penigequinolone. This Penicillium thymicola protein is Cyclopenase penL.